Here is a 231-residue protein sequence, read N- to C-terminus: SrfA-induced gene F protein (231 aa).

The protein is SrfA-induced gene F protein (sigF) of Dictyostelium discoideum (Social amoeba).